The primary structure comprises 312 residues: HTH-type transcriptional regulator PtxR (312 aa).

The region spanning 11-68 (LNLNHLYAFVAVAEHNSFTAAAEALGLSKSLLSEQLRRLEADLGIQLLTRTTRRMTLT) is the HTH lysR-type domain. Positions 28-47 (FTAAAEALGLSKSLLSEQLR) form a DNA-binding region, H-T-H motif.

This sequence belongs to the LysR transcriptional regulatory family. In terms of assembly, monomer in solution. May dimerize on binding to DNA. Interacts with PtxS in the absence of 2-ketogluconate. Binding of the 2-ketogluconate effector to PtxS causes PtxS/PtxR complex dissociation.

With respect to regulation, negatively regulated by PtxS, which interacts with PtxR and prevents its activity. Its function is as follows. Plays an important role in the regulation of the production of the virulence factor exotoxin A (toxA), via positive regulation of the transcription of the toxA gene. Acts by binding directly to the toxA promoter region. Besides toxA, PtxR modulates the expression of genes that code for the QS-controlled virulence factors. It negatively regulates the expression of the rhamnolipid and pyocyanine genes, through the autoinducer synthase RhlI, and the PQS synthesis operon pqsABCDE, while it positively regulates the expression of lasB through the autoinducer synthase LasI. Also positively regulates the expression of the exotoxin A regulatory protein (toxR or regA). Functionally, in addition, is involved in the positive regulation of glucose metabolism via the regulation of the expression of the kgu and gad operons. Acts by binding directly to the promoter region of the kgu and gad operons. This chain is HTH-type transcriptional regulator PtxR, found in Pseudomonas aeruginosa (strain ATCC 15692 / DSM 22644 / CIP 104116 / JCM 14847 / LMG 12228 / 1C / PRS 101 / PAO1).